Consider the following 210-residue polypeptide: Probable GTP-binding protein EngB (210 aa).

An EngB-type G domain is found at 29 to 203 (NGIEIAFAGR…SNKLDSWFAP (175 aa)). GTP-binding positions include 37-44 (GRSNAGKS), 64-68 (GRTQL), 82-85 (DLPG), 149-152 (TKAD), and 181-184 (IYSA). Residues serine 44 and threonine 66 each coordinate Mg(2+).

The protein belongs to the TRAFAC class TrmE-Era-EngA-EngB-Septin-like GTPase superfamily. EngB GTPase family. Requires Mg(2+) as cofactor.

Functionally, necessary for normal cell division and for the maintenance of normal septation. This Haemophilus ducreyi (strain 35000HP / ATCC 700724) protein is Probable GTP-binding protein EngB.